A 270-amino-acid chain; its full sequence is tRNA pseudouridine synthase A (270 aa).

The active-site Nucleophile is Asp-60. The interval 107–111 is RNA binding; sequence FHARF. Substrate is bound at residue Tyr-118. Residues 168–172 are interaction with tRNA; the sequence is QCQSR.

This sequence belongs to the tRNA pseudouridine synthase TruA family. Homodimer.

It catalyses the reaction uridine(38/39/40) in tRNA = pseudouridine(38/39/40) in tRNA. Its function is as follows. Formation of pseudouridine at positions 38, 39 and 40 in the anticodon stem and loop of transfer RNAs. The sequence is that of tRNA pseudouridine synthase A from Enterobacter sp. (strain 638).